A 266-amino-acid chain; its full sequence is UPF0246 protein Pcryo_0542 (266 aa).

Belongs to the UPF0246 family.

The polypeptide is UPF0246 protein Pcryo_0542 (Psychrobacter cryohalolentis (strain ATCC BAA-1226 / DSM 17306 / VKM B-2378 / K5)).